A 234-amino-acid polypeptide reads, in one-letter code: MNEIQEPIRLVLLRHGQSIWNQDRHFTGWGDIVLSPQGEQEALRAGHLLKQAGFTFDACFCSELQRASDTLAIVQSVMGLNHLSTYRTWRLNERHYGALEGMRPWAAIRKFGIWSTMKSQIRFDAAPPLLMPDDPRAPVNQPRYAAVDRTQLPLAESMQQTLERVRPLWQETILPEIRQGKRLLIVSHQNLLKTLVMQLEGLTGAQIMRLSITTGHPLCYELDHSLVPVKRYYL.

Residues 14-21 (RHGQSIWN), 27-28 (TG), arginine 66, and 93-96 (ERHY) each bind substrate. Residue histidine 15 is the Tele-phosphohistidine intermediate of the active site. Glutamate 93 (proton donor/acceptor) is an active-site residue.

This sequence belongs to the phosphoglycerate mutase family. BPG-dependent PGAM subfamily. As to quaternary structure, homodimer.

It catalyses the reaction (2R)-2-phosphoglycerate = (2R)-3-phosphoglycerate. It participates in carbohydrate degradation; glycolysis; pyruvate from D-glyceraldehyde 3-phosphate: step 3/5. In terms of biological role, catalyzes the interconversion of 2-phosphoglycerate and 3-phosphoglycerate. This chain is 2,3-bisphosphoglycerate-dependent phosphoglycerate mutase 1, found in Nitrosomonas europaea (strain ATCC 19718 / CIP 103999 / KCTC 2705 / NBRC 14298).